The following is a 215-amino-acid chain: L-fuculose phosphate aldolase (215 aa).

Substrate contacts are provided by residues Gly28–Asn29, Thr43–Gly44, and Ser71–Ser72. Glu73 (proton donor/acceptor) is an active-site residue. Positions 73, 92, 94, and 155 each coordinate Zn(2+).

The protein belongs to the aldolase class II family. AraD/FucA subfamily. Homotetramer. Requires Zn(2+) as cofactor.

The catalysed reaction is L-fuculose 1-phosphate = (S)-lactaldehyde + dihydroxyacetone phosphate. The protein operates within carbohydrate degradation; L-fucose degradation; L-lactaldehyde and glycerone phosphate from L-fucose: step 3/3. Functionally, involved in the degradation of L-fucose and D-arabinose. Catalyzes the reversible cleavage of L-fuculose 1-phosphate (Fuc1P) to yield dihydroxyacetone phosphate (DHAP) and L-lactaldehyde. In Escherichia coli O157:H7, this protein is L-fuculose phosphate aldolase.